Reading from the N-terminus, the 1026-residue chain is Unconventional myosin-Ic (1026 aa).

Met-1 carries the post-translational modification N-acetylmethionine. Residues 12-695 (GVQDFLLLEN…TLFITEDALE (684 aa)) form the Myosin motor domain. Residues Asn-53, Tyr-61, 104-113 (SGESGAGKTE), and 157-161 (NDNSS) each bind ATP. N6-methyllysine is present on Lys-349. Positions 572-594 (LAKLMDILMSKEPSYVRCIKPND) are actin-binding. IQ domains are found at residues 698-727 (KQTI…AVIV) and 721-750 (IRHA…AADT). Positions 849 to 1024 (KDGYSRSVPK…NGHLSVTTPR (176 aa)) constitute a TH1 domain.

The protein belongs to the TRAFAC class myosin-kinesin ATPase superfamily. Myosin family. Interacts (via its IQ motifs) with calm.

The protein localises to the cytoplasm. The protein resides in the cell cortex. It is found in the cell projection. It localises to the ruffle membrane. Its subcellular location is the cytoplasmic vesicle. The protein localises to the stereocilium membrane. Its function is as follows. Myosins are actin-based motor molecules with ATPase activity. Unconventional myosins serve in intracellular movements. Their highly divergent tails are presumed to bind to membranous compartments, which would be moved relative to actin filaments. The sequence is that of Unconventional myosin-Ic (myo1c) from Danio rerio (Zebrafish).